The chain runs to 271 residues: Glutamate racemase (271 aa).

Residues 10–11 and 42–43 each bind substrate; these read DS and YG. The Proton donor/acceptor role is filled by C74. 75–76 contributes to the substrate binding site; the sequence is NT. C189 functions as the Proton donor/acceptor in the catalytic mechanism. Residue 190 to 191 participates in substrate binding; sequence TH.

The protein belongs to the aspartate/glutamate racemases family.

It catalyses the reaction L-glutamate = D-glutamate. The protein operates within cell wall biogenesis; peptidoglycan biosynthesis. In terms of biological role, provides the (R)-glutamate required for cell wall biosynthesis. The protein is Glutamate racemase of Bartonella bacilliformis (strain ATCC 35685 / KC583 / Herrer 020/F12,63).